A 343-amino-acid chain; its full sequence is Probable potassium channel protein 2 (343 aa).

Over 1–7 the chain is Cytoplasmic; the sequence is METSKKL. The chain crosses the membrane as a helical span at residues 8–28; sequence VIVAVLSITLILTYAYLISII. The Extracellular segment spans residues 29-61; it reads EGVDYFTALYFSVITITTTGYGDFTPKTFLGRT. A Selectivity filter motif is present at residues 46–51; it reads TTGYGD. The helical transmembrane segment at 62-82 threads the bilayer; the sequence is LTVVYLCVGVGIVMYLFSLIA. Residues 83–343 are Cytoplasmic-facing; it reads EFIVEGKFEE…NLVKKKKKKL (261 aa). The RCK N-terminal domain maps to 107 to 227; sequence KDHYIICGYG…KIAGANRVVS (121 aa). Positions 253 to 338 constitute an RCK C-terminal domain; that stretch reads IKIAKDEYEE…LKYLENLVKK (86 aa).

It is found in the cell membrane. In terms of biological role, probable potassium channel protein. This chain is Probable potassium channel protein 2, found in Methanocaldococcus jannaschii (strain ATCC 43067 / DSM 2661 / JAL-1 / JCM 10045 / NBRC 100440) (Methanococcus jannaschii).